A 723-amino-acid polypeptide reads, in one-letter code: BTB/POZ domain-containing protein 18 (723 aa).

Residues 34-102 (CDALLQAEGE…LYTSEMEVSQ (69 aa)) form the BTB domain. Disordered stretches follow at residues 150–176 (APIS…PSPL), 188–350 (EGAH…EEGQ), and 370–394 (EPPL…PSGT). Composition is skewed to polar residues over residues 162–174 (RPQT…QTPS) and 195–205 (NLPNADSLSDT). Composition is skewed to low complexity over residues 217-227 (QESRSSPSSQR) and 271-286 (TSTP…SMPT). 2 stretches are compositionally biased toward basic and acidic residues: residues 303–312 (QGVDKQKPGE) and 327–336 (KPAENKKQSP). The residue at position 414 (serine 414) is a Phosphoserine. A disordered region spans residues 603–637 (TPDLEITSSQPLDGQGEKLLHFDSSDPSQRSYNHL). Over residues 617–626 (QGEKLLHFDS) the composition is skewed to basic and acidic residues. Positions 627 to 636 (SDPSQRSYNH) are enriched in polar residues. Phosphoserine occurs at positions 682 and 683. The interval 699–723 (LGPTSVPSVWPDPSSESETEVDILT) is disordered. Acidic residues predominate over residues 713–723 (SESETEVDILT).

As to expression, expressed in testis.

Its subcellular location is the nucleus. Functionally, specifically required during spermatogenesis to promote expression of piRNA precursors. The piRNA metabolic process mediates the repression of transposable elements during meiosis by forming complexes composed of piRNAs and Piwi proteins and governs the methylation and subsequent repression of transposons, which is essential for the germline integrity. Acts by facilitating transcription elongation at piRNA loci during pachytene. The chain is BTB/POZ domain-containing protein 18 from Mus musculus (Mouse).